We begin with the raw amino-acid sequence, 1347 residues long: Serine-aspartate repeat-containing protein D (1347 aa).

A signal peptide spans 1-35; it reads MLNRENKTAITRKGMVSNRLNKFSIRKYTVGTASI. The YSIRK-G/S signaling motif motif lies at 23–34; that stretch reads FSIRKYTVGTAS. Residues 36–568 form a ligand binding A region region; that stretch reads LVGTTLIFGL…NNQSGGAGQE (533 aa). The disordered stretch occupies residues 55 to 185; that stretch reads STNKELNEAT…NKKVDAKTES (131 aa). Polar residues-rich tracts occupy residues 62–71 and 94–109; these read EATTSASDNQ and EMVS…NGNK. Residues 130–145 are compositionally biased toward basic and acidic residues; it reads KSDEQASPKSTNEDLN. Composition is skewed to polar residues over residues 146 to 155 and 163 to 173; these read TKQTISNQEA and NKSVVNAQPTN. Over residues 174 to 183 the composition is skewed to basic and acidic residues; the sequence is EENKKVDAKT. CNA-B domains lie at 569-680, 681-791, 792-901, 902-1012, and 1013-1123; these read VYKI…IYKP, KYNL…YKTP, KYNL…FYKP, TYNL…YKTS, and KYSL…EEDT. Disordered regions lie at residues 857-883, 972-992, and 1078-1323; these read ETPS…TSTT, YTPT…GLTT, and EKPA…SNNA. Polar residues-rich tracts occupy residues 860 to 869 and 972 to 981; these read SGYTPTQVGS and YTPTSVTSGN. Acidic residues-rich tracts occupy residues 1091–1101 and 1118–1286; these read TEDDKDADGGE and YFEE…DSDS. Positions 1310–1314 match the LPXTG sorting signal motif; sequence LPETG. T1313 bears the Pentaglycyl murein peptidoglycan amidated threonine mark. Positions 1314 to 1347 are cleaved as a propeptide — removed by sortase; that stretch reads GNENSGSNNATLFGGLFAALGSLLLFGRRKKQNK.

Belongs to the serine-aspartate repeat-containing protein (SDr) family. Interacts with host DSG1; this interaction increases S.aureus adherence to keratinocytes.

It localises to the secreted. It is found in the cell wall. Its function is as follows. Cell surface-associated calcium-binding protein which plays an important role in adhesion and pathogenesis. Mediates interactions with components of the extracellular matrix such as host DSG1 to promote bacterial adhesion to host cells. Contributes to the resistance to killing by innate immune components such as neutrophils present in blood and thus attenuates bacterial clearance. The protein is Serine-aspartate repeat-containing protein D (sdrD) of Staphylococcus aureus (strain MW2).